The following is a 530-amino-acid chain: Bifunctional purine biosynthesis protein PurH (530 aa).

An MGS-like domain is found at 1–149 (MASDFLPVHR…KNFARVAVAT (149 aa)).

Belongs to the PurH family.

The enzyme catalyses (6R)-10-formyltetrahydrofolate + 5-amino-1-(5-phospho-beta-D-ribosyl)imidazole-4-carboxamide = 5-formamido-1-(5-phospho-D-ribosyl)imidazole-4-carboxamide + (6S)-5,6,7,8-tetrahydrofolate. The catalysed reaction is IMP + H2O = 5-formamido-1-(5-phospho-D-ribosyl)imidazole-4-carboxamide. It participates in purine metabolism; IMP biosynthesis via de novo pathway; 5-formamido-1-(5-phospho-D-ribosyl)imidazole-4-carboxamide from 5-amino-1-(5-phospho-D-ribosyl)imidazole-4-carboxamide (10-formyl THF route): step 1/1. The protein operates within purine metabolism; IMP biosynthesis via de novo pathway; IMP from 5-formamido-1-(5-phospho-D-ribosyl)imidazole-4-carboxamide: step 1/1. The polypeptide is Bifunctional purine biosynthesis protein PurH (Xylella fastidiosa (strain M12)).